Consider the following 315-residue polypeptide: Ribosomal protein L11 methyltransferase (315 aa).

Residues Thr161, Gly182, Asp204, and Asn248 each coordinate S-adenosyl-L-methionine.

The protein belongs to the methyltransferase superfamily. PrmA family.

It localises to the cytoplasm. It catalyses the reaction L-lysyl-[protein] + 3 S-adenosyl-L-methionine = N(6),N(6),N(6)-trimethyl-L-lysyl-[protein] + 3 S-adenosyl-L-homocysteine + 3 H(+). Its function is as follows. Methylates ribosomal protein L11. The polypeptide is Ribosomal protein L11 methyltransferase (Shouchella clausii (strain KSM-K16) (Alkalihalobacillus clausii)).